The following is a 452-amino-acid chain: Pup--protein ligase (452 aa).

E9 lines the Mg(2+) pocket. Residue R53 participates in ATP binding. Y55 lines the Mg(2+) pocket. D57 (proton acceptor) is an active-site residue. Residue E63 participates in Mg(2+) binding. T66 and W419 together coordinate ATP.

This sequence belongs to the Pup ligase/Pup deamidase family. Pup-conjugating enzyme subfamily.

It catalyses the reaction ATP + [prokaryotic ubiquitin-like protein]-L-glutamate + [protein]-L-lysine = ADP + phosphate + N(6)-([prokaryotic ubiquitin-like protein]-gamma-L-glutamyl)-[protein]-L-lysine.. It functions in the pathway protein degradation; proteasomal Pup-dependent pathway. It participates in protein modification; protein pupylation. Its function is as follows. Catalyzes the covalent attachment of the prokaryotic ubiquitin-like protein modifier Pup to the proteasomal substrate proteins, thereby targeting them for proteasomal degradation. This tagging system is termed pupylation. The ligation reaction involves the side-chain carboxylate of the C-terminal glutamate of Pup and the side-chain amino group of a substrate lysine. The protein is Pup--protein ligase of Gordonia bronchialis (strain ATCC 25592 / DSM 43247 / BCRC 13721 / JCM 3198 / KCTC 3076 / NBRC 16047 / NCTC 10667) (Rhodococcus bronchialis).